A 167-amino-acid polypeptide reads, in one-letter code: MTAPEEFNEDYTAEDAAVEVVEEDYGYEAEPATYAPVVIDRPVQTVGRRKEAVVRVRLVPGTGQFVLNGRSIEDYFPNKVHQQLVKSPLVTVERTESFDIHARLVGGGPSGQAGALRLAIARALIEVTPEDRPALKRAGFLTRDPRATERKKYGLKKARKAPQYSKR.

Positions 136 to 167 are disordered; sequence KRAGFLTRDPRATERKKYGLKKARKAPQYSKR. A compositionally biased stretch (basic and acidic residues) spans 143-152; that stretch reads RDPRATERKK. Positions 153 to 167 are enriched in basic residues; sequence YGLKKARKAPQYSKR.

This sequence belongs to the universal ribosomal protein uS9 family.

This Nocardia farcinica (strain IFM 10152) protein is Small ribosomal subunit protein uS9.